Consider the following 152-residue polypeptide: Cytochrome c-type biogenesis protein CcmE (152 aa).

At 1–8 the chain is on the cytoplasmic side; it reads MQARRKTR. A helical; Signal-anchor for type II membrane protein membrane pass occupies residues 9–29; the sequence is LYIVLAVLAGLGLTVSLTLYA. At 30–152 the chain is on the periplasmic side; the sequence is LSSNIDLFYT…MTPEKTGAQP (123 aa). Heme is bound by residues H130 and Y134. The interval 133-152 is disordered; sequence NYTPPEVKNAMTPEKTGAQP.

It belongs to the CcmE/CycJ family.

It localises to the cell inner membrane. In terms of biological role, heme chaperone required for the biogenesis of c-type cytochromes. Transiently binds heme delivered by CcmC and transfers the heme to apo-cytochromes in a process facilitated by CcmF and CcmH. This is Cytochrome c-type biogenesis protein CcmE from Klebsiella pneumoniae (strain 342).